The following is a 205-amino-acid chain: Urease accessory protein UreE (205 aa).

Over residues A178–G196 the composition is skewed to basic residues. A disordered region spans residues A178–S205.

Belongs to the UreE family.

Its subcellular location is the cytoplasm. Its function is as follows. Involved in urease metallocenter assembly. Binds nickel. Probably functions as a nickel donor during metallocenter assembly. The chain is Urease accessory protein UreE from Bordetella pertussis (strain Tohama I / ATCC BAA-589 / NCTC 13251).